The chain runs to 67 residues: Kappa-conotoxin-like 2 (67 aa).

The N-terminal stretch at 1-26 (MMFRLTSVSCFLLVIACLNLFQVVLT) is a signal peptide. 4 disulfide bridges follow: Cys-29–Cys-43, Cys-36–Cys-48, Cys-42–Cys-51, and Cys-47–Cys-55. Position 59 is a phenylalanine amide (Phe-59). The propeptide occupies 63–67 (ATFQE).

It belongs to the conotoxin I2 superfamily. Expressed by the venom duct.

The protein localises to the secreted. Its function is as follows. Inhibits the vertebrate voltage-gated potassium channels Kv1.1/KCNA1 and Kv1.3/KCNA3. This is Kappa-conotoxin-like 2 from Conus vexillum (Flag cone).